The sequence spans 507 residues: Methionine--tRNA ligase (507 aa).

The short motif at 12 to 22 is the 'HIGH' region element; that stretch reads YYVNDVSHIGH. The short motif at 295 to 299 is the 'KMSKS' region element; sequence KISKS. Residue Lys298 coordinates ATP.

The protein belongs to the class-I aminoacyl-tRNA synthetase family. MetG type 2B subfamily. As to quaternary structure, monomer.

Its subcellular location is the cytoplasm. The enzyme catalyses tRNA(Met) + L-methionine + ATP = L-methionyl-tRNA(Met) + AMP + diphosphate. Functionally, is required not only for elongation of protein synthesis but also for the initiation of all mRNA translation through initiator tRNA(fMet) aminoacylation. The chain is Methionine--tRNA ligase from Rickettsia typhi (strain ATCC VR-144 / Wilmington).